Reading from the N-terminus, the 216-residue chain is Peroxiredoxin (216 aa).

Positions 2 to 158 constitute a Thioredoxin domain; it reads VVIGEKFPEV…ILRLVKALKV (157 aa). Residue C46 is the Cysteine sulfenic acid (-SOH) intermediate of the active site. R121 is a substrate binding site. The cysteines at positions 205 and 211 are disulfide-linked.

It belongs to the peroxiredoxin family. Prx6 subfamily. In terms of assembly, homodecamer. Pentamer of dimers that assemble into a ring structure.

It localises to the cytoplasm. The catalysed reaction is a hydroperoxide + [thioredoxin]-dithiol = an alcohol + [thioredoxin]-disulfide + H2O. Functionally, thiol-specific peroxidase that catalyzes the reduction of hydrogen peroxide and organic hydroperoxides to water and alcohols, respectively. Plays a role in cell protection against oxidative stress by detoxifying peroxides. The protein is Peroxiredoxin of Thermococcus kodakarensis (strain ATCC BAA-918 / JCM 12380 / KOD1) (Pyrococcus kodakaraensis (strain KOD1)).